The following is a 966-amino-acid chain: Glycine dehydrogenase (decarboxylating) (966 aa).

Lys713 is modified (N6-(pyridoxal phosphate)lysine).

The protein belongs to the GcvP family. In terms of assembly, the glycine cleavage system is composed of four proteins: P, T, L and H. It depends on pyridoxal 5'-phosphate as a cofactor.

The enzyme catalyses N(6)-[(R)-lipoyl]-L-lysyl-[glycine-cleavage complex H protein] + glycine + H(+) = N(6)-[(R)-S(8)-aminomethyldihydrolipoyl]-L-lysyl-[glycine-cleavage complex H protein] + CO2. Its function is as follows. The glycine cleavage system catalyzes the degradation of glycine. The P protein binds the alpha-amino group of glycine through its pyridoxal phosphate cofactor; CO(2) is released and the remaining methylamine moiety is then transferred to the lipoamide cofactor of the H protein. The polypeptide is Glycine dehydrogenase (decarboxylating) (Shewanella halifaxensis (strain HAW-EB4)).